The following is a 425-amino-acid chain: CinA-like protein (425 aa).

This sequence belongs to the CinA family.

This Shewanella sp. (strain ANA-3) protein is CinA-like protein.